The primary structure comprises 188 residues: Large ribosomal subunit protein eL18 (188 aa).

The disordered stretch occupies residues 153–188 (GKAPGTPHSHTKPYVRSKGRKFERARGRRASCGYKN). The span at 161–171 (SHTKPYVRSKG) shows a compositional bias: basic residues.

This sequence belongs to the eukaryotic ribosomal protein eL18 family. In terms of assembly, component of the large ribosomal subunit.

The protein localises to the cytoplasm. It localises to the cytosol. Its subcellular location is the rough endoplasmic reticulum. Its function is as follows. Component of the large ribosomal subunit. The ribosome is a large ribonucleoprotein complex responsible for the synthesis of proteins in the cell. The sequence is that of Large ribosomal subunit protein eL18 (rpl18) from Oreochromis mossambicus (Mozambique tilapia).